A 265-amino-acid chain; its full sequence is MSWDDEAINGSMGNDDAVLMDSWDAEIGDDEPVMQSWDAEEEEKKPAPKPKKEQPKKVKKGKESSADRALLDIDTLDEKTRKELIKKAEMESDLNNAADLFAGLGVAEEHPRARALQKEQEEQALKRPAFTKDTPIETHPLFNAETKREYQDLRKALTAAITPMNKKSPLNYSSSLAIDLIRDVAKPMSIESIRQTVATLNVLIKDKEREERQARLARVRGGTATGGAGKKKVKGKTNLGGAFKKDQDFDLDGPDDFEFGDDDFM.

Residues 1–71 are disordered; that stretch reads MSWDDEAING…KESSADRALL (71 aa). Residues 23–32 show a composition bias toward acidic residues; that stretch reads WDAEIGDDEP. The segment covering 42–71 has biased composition (basic and acidic residues); the sequence is EEKKPAPKPKKEQPKKVKKGKESSADRALL. Ser-65 carries the post-translational modification Phosphoserine. Thr-75 is modified (phosphothreonine). Ser-92 is subject to Phosphoserine. Residues 219 to 265 are disordered; sequence VRGGTATGGAGKKKVKGKTNLGGAFKKDQDFDLDGPDDFEFGDDDFM. Arg-220 is subject to Omega-N-methylarginine. A compositionally biased stretch (acidic residues) spans 249–265; that stretch reads FDLDGPDDFEFGDDDFM.

This sequence belongs to the eIF-3 subunit J family. Probable component of the eukaryotic translation initiation factor 3 (eIF-3) complex. Is not part of the eIF-3 core complex, with which it is associated in substochiometric amounts.

The protein resides in the cytoplasm. Component of the eukaryotic translation initiation factor 3 (eIF-3) complex, which is involved in protein synthesis of a specialized repertoire of mRNAs and, together with other initiation factors, stimulates binding of mRNA and methionyl-tRNAi to the 40S ribosome. The eIF-3 complex specifically targets and initiates translation of a subset of mRNAs involved in cell proliferation. The sequence is that of Eukaryotic translation initiation factor 3 subunit J from Saccharomyces cerevisiae (strain ATCC 204508 / S288c) (Baker's yeast).